The chain runs to 292 residues: Ventral anterior homeobox 2 (292 aa).

The span at 1 to 36 (MGDGGAERDRGPKRREEPGGRSGRHGEHRGAEDLRA) shows a compositional bias: basic and acidic residues. A disordered region spans residues 1–74 (MGDGGAERDR…DGQQALGETD (74 aa)). Residues 102-161 (PKRTRTSFTAEQLYRLEMEFQRCQYVVGRERTELARQLNLSETQVKVWFQNRRTKQKKDQ) constitute a DNA-binding region (homeobox). Residues 207–242 (LPGLPASHRGTSLVDPRNSSPRLNPMPSASASSPLP) form a disordered region.

It belongs to the EMX homeobox family. Expressed in the developing and mature retina.

It is found in the nucleus. In terms of biological role, transcription factor that may function in dorsoventral specification of the forebrain. Regulates the expression of Wnt signaling antagonists including the expression of a truncated TCF7L2 isoform that cannot bind CTNNB1 and acts therefore as a potent dominant-negative Wnt antagonist. Plays a crucial role in eye development and, in particular, in the specification of the ventral optic vesicle. May be a regulator of axial polarization in the retina. This chain is Ventral anterior homeobox 2 (Vax2), found in Mus musculus (Mouse).